The chain runs to 250 residues: 5'-nucleotidase SurE (250 aa).

Residues Asp-8, Asp-9, Ser-39, and Asn-95 each contribute to the a divalent metal cation site.

The protein belongs to the SurE nucleotidase family. A divalent metal cation is required as a cofactor.

The protein localises to the cytoplasm. It carries out the reaction a ribonucleoside 5'-phosphate + H2O = a ribonucleoside + phosphate. In terms of biological role, nucleotidase that shows phosphatase activity on nucleoside 5'-monophosphates. This Syntrophobacter fumaroxidans (strain DSM 10017 / MPOB) protein is 5'-nucleotidase SurE.